Consider the following 321-residue polypeptide: Arabinan endo-1,5-alpha-L-arabinosidase A (321 aa).

Positions 1-19 (MYSLLTALSVPLLAGLAHG) are cleaved as a signal peptide. D34 serves as the catalytic Proton acceptor. A glycan (N-linked (GlcNAc...) asparagine) is linked at N192. E200 (proton donor) is an active-site residue.

It belongs to the glycosyl hydrolase 43 family.

It localises to the secreted. It catalyses the reaction Endohydrolysis of (1-&gt;5)-alpha-arabinofuranosidic linkages in (1-&gt;5)-arabinans.. It functions in the pathway glycan metabolism; L-arabinan degradation. Endo-1,5-alpha-L-arabinanase involved in degradation of pectin. Its preferred substrate is linear 1,5-alpha-L-arabinan. This chain is Arabinan endo-1,5-alpha-L-arabinosidase A (abnA), found in Aspergillus aculeatus.